Consider the following 183-residue polypeptide: Glutathione-regulated potassium-efflux system ancillary protein KefG (183 aa).

It belongs to the NAD(P)H dehydrogenase (quinone) family. KefG subfamily. In terms of assembly, interacts with KefB.

The protein resides in the cell inner membrane. The catalysed reaction is a quinone + NADH + H(+) = a quinol + NAD(+). It carries out the reaction a quinone + NADPH + H(+) = a quinol + NADP(+). Its function is as follows. Regulatory subunit of a potassium efflux system that confers protection against electrophiles. Required for full activity of KefB. The polypeptide is Glutathione-regulated potassium-efflux system ancillary protein KefG (Escherichia coli O6:K15:H31 (strain 536 / UPEC)).